Reading from the N-terminus, the 91-residue chain is Small ribosomal subunit protein bS18 (91 aa).

Belongs to the bacterial ribosomal protein bS18 family. In terms of assembly, part of the 30S ribosomal subunit. Forms a tight heterodimer with protein bS6.

Its function is as follows. Binds as a heterodimer with protein bS6 to the central domain of the 16S rRNA, where it helps stabilize the platform of the 30S subunit. In Wolbachia sp. subsp. Brugia malayi (strain TRS), this protein is Small ribosomal subunit protein bS18.